A 971-amino-acid chain; its full sequence is uncharacterized protein (971 aa).

This is an uncharacterized protein from Borreliella burgdorferi (strain ATCC 35210 / DSM 4680 / CIP 102532 / B31) (Borrelia burgdorferi).